A 208-amino-acid chain; its full sequence is Uracil phosphoribosyltransferase (208 aa).

Residues R77, R102, and 129–137 (DPMLATGNS) contribute to the 5-phospho-alpha-D-ribose 1-diphosphate site. Uracil is bound by residues I193 and 198 to 200 (GDA). D199 is a binding site for 5-phospho-alpha-D-ribose 1-diphosphate.

The protein belongs to the UPRTase family. Mg(2+) is required as a cofactor.

The catalysed reaction is UMP + diphosphate = 5-phospho-alpha-D-ribose 1-diphosphate + uracil. It functions in the pathway pyrimidine metabolism; UMP biosynthesis via salvage pathway; UMP from uracil: step 1/1. With respect to regulation, allosterically activated by GTP. Functionally, catalyzes the conversion of uracil and 5-phospho-alpha-D-ribose 1-diphosphate (PRPP) to UMP and diphosphate. This is Uracil phosphoribosyltransferase from Mycoplasmopsis agalactiae (strain NCTC 10123 / CIP 59.7 / PG2) (Mycoplasma agalactiae).